The chain runs to 191 residues: Cytochrome c oxidase assembly protein CtaG (191 aa).

Over 1–9 the chain is Cytoplasmic; it reads MSLSPHQKT. A helical; Signal-anchor for type II membrane protein membrane pass occupies residues 10-30; it reads AGGLVLVVAVMGAASFAAVPF. The Periplasmic segment spans residues 31-191; that stretch reads YNWFCRVTGF…LAAESATDVN (161 aa).

Belongs to the COX11/CtaG family.

Its subcellular location is the cell inner membrane. Exerts its effect at some terminal stage of cytochrome c oxidase synthesis, probably by being involved in the insertion of the copper B into subunit I. This chain is Cytochrome c oxidase assembly protein CtaG, found in Cereibacter sphaeroides (strain ATCC 17029 / ATH 2.4.9) (Rhodobacter sphaeroides).